The chain runs to 122 residues: Large ribosomal subunit protein uL18 (122 aa).

This sequence belongs to the universal ribosomal protein uL18 family. In terms of assembly, part of the 50S ribosomal subunit; part of the 5S rRNA/L5/L18/L25 subcomplex. Contacts the 5S and 23S rRNAs.

This is one of the proteins that bind and probably mediate the attachment of the 5S RNA into the large ribosomal subunit, where it forms part of the central protuberance. The polypeptide is Large ribosomal subunit protein uL18 (Citrifermentans bemidjiense (strain ATCC BAA-1014 / DSM 16622 / JCM 12645 / Bem) (Geobacter bemidjiensis)).